The following is a 922-amino-acid chain: Centrosomal protein of 104 kDa (922 aa).

Residues 210-277 (EVAQIIRRLD…DLAKEKKQQM (68 aa)) adopt a coiled-coil conformation. Residues 307–318 (PLQPLASPSSPQ) show a composition bias toward low complexity. Disordered stretches follow at residues 307 to 333 (PLQP…EELA) and 348 to 419 (LASS…PLTE). The segment covering 396–407 (PEVREADSDVRR) has biased composition (basic and acidic residues). HEAT repeat units lie at residues 526 to 564 (AIPL…LQLI) and 601 to 637 (GFTV…YRQH). Composition is skewed to basic and acidic residues over residues 673-697 (TEAE…EETK) and 714-725 (QEKENEAVKLKN). 2 disordered regions span residues 673 to 741 (TEAE…TPEI) and 880 to 922 (PAPQ…HTRR). Residues 678–705 (KTQKRVVTKEAEKQKKEETKALQGLSAA) are a coiled coil.

As to quaternary structure, interacts with CCP110 and CEP97. Interacts with ARMC9, TOGARAM1, CCDC66 and CSPP1. As to expression, expressed predominantly in the brain. Also detected, although at much lower levels, in the heart and the liver. Within the brain, expressed in the cerebral cortex, hippocampus, cerebellum and brainstem.

It is found in the cell projection. The protein resides in the cilium. It localises to the cytoplasm. The protein localises to the cytoskeleton. Its subcellular location is the microtubule organizing center. It is found in the centrosome. The protein resides in the centriole. It localises to the spindle pole. Its function is as follows. Required for ciliogenesis and for structural integrity at the ciliary tip. This Rattus norvegicus (Rat) protein is Centrosomal protein of 104 kDa (Cep104).